We begin with the raw amino-acid sequence, 278 residues long: Ras-related protein Rab-40B (278 aa).

The GTP site is built by Ser-23, Gly-26, and Lys-27. A switch-I region spans residues 41–49 (SPYGHPAGI). Asp-69 contacts Mg(2+). Residues Gly-72, Asn-126, and Arg-127 each coordinate GTP. The tract at residues 72-88 (GQGRFCTIFRSYSRGAQ) is switch-II. One can recognise an SOCS box domain in the interval 175-228 (LLRHGMDRLWRPSKVLSLQELCCRAVVSCTPGHLVDKLPLPVALRSHLKSFSMA). The disordered stretch occupies residues 245 to 278 (ANSSHKRNSFRKVRTIRPPQSPPRNCARNSCKIS). A compositionally biased stretch (basic residues) spans 248 to 259 (SHKRNSFRKVRT). Residue Cys-270 is the site of S-palmitoyl cysteine attachment. Cys-275 is lipidated: S-geranylgeranyl cysteine.

The protein belongs to the small GTPase superfamily. Rab family. In terms of assembly, component of the cullin-5-RING E3 ubiquitin-protein ligase complex (ECS(RAB40B) complex) composed of CUL5, Elongin BC (ELOB and ELOC), RNF7/RBX2 and RAB40B; RAB40B interaction with ECS complex is GTP-independent. Binds (GTP-bound) LIMA1; interaction promotes LIMA1 subcellular localization in lamellipodia during cell migration. Interacts (GTP-bound) with TKS5/SH3PXD2A (via PX domain); interaction promotes invadopodia-mediated extracellular matrix degradation. Mg(2+) is required as a cofactor.

The protein resides in the cell membrane. The protein localises to the cytoplasm. It is found in the cytosol. Its subcellular location is the cell projection. It localises to the lamellipodium membrane. The protein resides in the ruffle. The catalysed reaction is GTP + H2O = GDP + phosphate + H(+). It participates in protein modification; protein ubiquitination. Its activity is regulated as follows. Regulated by guanine nucleotide exchange factors (GEFs) which promote the exchange of bound GDP for free GTP. Regulated by GTPase activating proteins (GAPs) which increase the GTP hydrolysis activity. Inhibited by GDP dissociation inhibitors (GDIs). RAB40B small GTPase acts as substrate-recognition components of the ECS(RAB40B) E3 ubiquitin ligase complex which mediates the ubiquitination of target proteins. The Rab40 subfamily belongs to the Rab family that are key regulators of intracellular membrane trafficking, from the formation of transport vesicles to their fusion with membranes. Rabs cycle between an inactive GDP-bound form and an active GTP-bound form that is able to recruit to membranes different sets of downstream effectors directly responsible for vesicle formation, movement, tethering and fusion. As part of the ECS(RAB40B) complex, GTP-bound RAB40B promotes LIMA1/EPLIN ubiquitination and degradation, thereby regulating leading-edge actin dynamics during cell migration. As part of the ECS(RAB40B) complex, GTP-bound RAB40B also ubiquitinates RAP2A GTPase which promotes its localization to lamellipodia and activation to drive cell migration. The ECS(RAB40B) complex does not mediate canonical ubiquitin-dependent degradation of RAP2. RAB40B also binds TKS5/SH3PXD2A effector independently from ECS complex to promote invadopodia-mediated extracellular matrix degradation. The polypeptide is Ras-related protein Rab-40B (Mus musculus (Mouse)).